Reading from the N-terminus, the 474-residue chain is Peroxisome proliferator-activated receptor alpha (474 aa).

The nuclear receptor DNA-binding region spans 106 to 180 (NLECRVCSDK…VGMSHNAIRF (75 aa)). NR C4-type zinc fingers lie at residues 109-129 (CRVCSDKASGFHYGVHACEGC) and 146-168 (CERMCKIQKKNRNKCQYCRFEKC). Positions 245-472 (FVIHDMETLC…HPLLQEIYRD (228 aa)) constitute an NR LBD domain.

It belongs to the nuclear hormone receptor family. NR1 subfamily. In terms of assembly, heterodimer with the retinoid X receptor. Ubiquitous.

It localises to the nucleus. Ligand-activated transcription factor. Key regulator of lipid metabolism. Activated by lipids. Receptor for peroxisome proliferators such as hypolipidemic drugs and fatty acids. Once activated by a ligand, the receptor binds to promoter elements of target genes. Regulates the peroxisomal beta-oxidation pathway of fatty acids. The polypeptide is Peroxisome proliferator-activated receptor alpha (ppara) (Xenopus laevis (African clawed frog)).